The chain runs to 313 residues: NAD-capped RNA hydrolase NudC (313 aa).

A substrate-binding site is contributed by Arg-111. Residues 168 to 293 enclose the Nudix hydrolase domain; it reads PRIDPAVICL…DWSSASESKL (126 aa). A divalent metal cation-binding residues include Ala-202, Glu-218, and Glu-222. The Nudix box motif lies at 203 to 224; that stretch reads GFVEAGESFEVCVAREIREEIG. 236–243 provides a ligand contact to substrate; that stretch reads QQWPFPRS. Glu-264 lines the a divalent metal cation pocket.

This sequence belongs to the Nudix hydrolase family. NudC subfamily. Homodimer. Mg(2+) serves as cofactor. The cofactor is Mn(2+).

It catalyses the reaction a 5'-end NAD(+)-phospho-ribonucleoside in mRNA + H2O = a 5'-end phospho-adenosine-phospho-ribonucleoside in mRNA + beta-nicotinamide D-ribonucleotide + 2 H(+). The enzyme catalyses NAD(+) + H2O = beta-nicotinamide D-ribonucleotide + AMP + 2 H(+). The catalysed reaction is NADH + H2O = reduced beta-nicotinamide D-ribonucleotide + AMP + 2 H(+). Its function is as follows. mRNA decapping enzyme that specifically removes the nicotinamide adenine dinucleotide (NAD) cap from a subset of mRNAs by hydrolyzing the diphosphate linkage to produce nicotinamide mononucleotide (NMN) and 5' monophosphate mRNA. The NAD-cap is present at the 5'-end of some mRNAs and stabilizes RNA against 5'-processing. Has preference for mRNAs with a 5'-end purine. Catalyzes the hydrolysis of a broad range of dinucleotide pyrophosphates. The polypeptide is NAD-capped RNA hydrolase NudC (Mycobacterium tuberculosis (strain ATCC 25177 / H37Ra)).